The following is a 943-amino-acid chain: Nuclear factor of activated T-cells, cytoplasmic 1 (943 aa).

Residues G22–A48 form a disordered region. Residues P118–T123 are calcineurin-binding. The interval L126–E218 is transactivation domain A (TAD-A). Positions P200–D298 are disordered. The span at Q201–T214 shows a compositional bias: polar residues. 2 tandem repeats follow at residues S203–E219 and S233–E249. A 3 X SP repeats region spans residues S203–D298. Phosphoserine occurs at positions 233 and 237. Over residues H236–E248 the composition is skewed to polar residues. Phosphoserine; by PKA is present on S245. The Nuclear localization signal motif lies at K265 to K267. S269 carries the phosphoserine; by PKA modification. The span at P276–H288 shows a compositional bias: pro residues. Repeat 3 spans residues S282–D298. The residue at position 294 (S294) is a Phosphoserine; by PKA. The Nuclear export signal motif lies at S310–T321. An RHD domain is found at P410–A592. Residues R439–G446 mediate DNA binding. The short motif at K682 to K684 is the Nuclear localization signal element. A transactivation domain B (TAD-B) region spans residues T703–S943. The disordered stretch occupies residues H787–T912. Residues S846–T855 are compositionally biased toward pro residues. The short motif at Y924–R933 is the Nuclear export signal element.

As to quaternary structure, member of the multicomponent NFATC transcription complex that consists of at least two components, a pre-existing cytoplasmic component NFATC2 and an inducible nuclear component NFATC1. Other members such as NFATC4, NFATC3 or members of the activating protein-1 family, MAF, GATA4 and Cbp/p300 can also bind the complex. NFATC proteins bind to DNA as monomers. Interacts with HOMER2 and HOMER3; this interaction may compete with calcineurin/PPP3CA-binding and hence prevent NFATC1 dephosphorylation and activation. Interacts with TLE6/GRG6. In terms of processing, phosphorylated by NFATC-kinase and GSK3B; phosphorylation induces NFATC1 nuclear exit and dephosphorylation by calcineurin promotes nuclear import. Phosphorylation by PKA and DYRK2 negatively modulates nuclear accumulation, and promotes subsequent phosphorylation by GSK3B or casein kinase 1. In terms of tissue distribution, expressed in thymus, peripheral leukocytes as T-cells and spleen. Isoforms A are preferentially expressed in effector T-cells (thymus and peripheral leukocytes) whereas isoforms B and isoforms C are preferentially expressed in naive T-cells (spleen). Isoforms B are expressed in naive T-cells after first antigen exposure and isoforms A are expressed in effector T-cells after second antigen exposure. Isoforms IA are widely expressed but not detected in liver nor pancreas, neural expression is strongest in corpus callosum. Isoforms IB are expressed mostly in muscle, cerebellum, placenta and thymus, neural expression in fetal and adult brain, strongest in corpus callosum.

It localises to the cytoplasm. Its subcellular location is the nucleus. Its function is as follows. Plays a role in the inducible expression of cytokine genes in T-cells, especially in the induction of the IL-2 or IL-4 gene transcription. Also controls gene expression in embryonic cardiac cells. Could regulate not only the activation and proliferation but also the differentiation and programmed death of T-lymphocytes as well as lymphoid and non-lymphoid cells. Required for osteoclastogenesis and regulates many genes important for osteoclast differentiation and function. The sequence is that of Nuclear factor of activated T-cells, cytoplasmic 1 (NFATC1) from Homo sapiens (Human).